Here is a 370-residue protein sequence, read N- to C-terminus: Caffeic acid 3-O-methyltransferase (370 aa).

Positions 1–2 (MG) are excised as a propeptide. 135-141 (MNQDKVL) serves as a coordination point for substrate. Residues 167–185 (AFEYHGTDPRFNKVFNRGM) are substrate binding. Residues G213, D236, D256, M257, and K270 each contribute to the S-adenosyl-L-methionine site. Catalysis depends on H274, which acts as the Proton acceptor.

It belongs to the class I-like SAM-binding methyltransferase superfamily. Cation-independent O-methyltransferase family. COMT subfamily. Homodimer.

The enzyme catalyses (E)-caffeate + S-adenosyl-L-methionine = (E)-ferulate + S-adenosyl-L-homocysteine + H(+). Its pathway is aromatic compound metabolism; phenylpropanoid biosynthesis. Functionally, catalyzes the conversion of caffeic acid to ferulic acid and of 5-hydroxyferulic acid to sinapic acid. The resulting products may subsequently be converted to the corresponding alcohols that are incorporated into lignins. The sequence is that of Caffeic acid 3-O-methyltransferase (COMT) from Clarkia breweri (Fairy fans).